A 153-amino-acid polypeptide reads, in one-letter code: Transcription antitermination protein NusB (153 aa).

Belongs to the NusB family.

Its function is as follows. Involved in transcription antitermination. Required for transcription of ribosomal RNA (rRNA) genes. Binds specifically to the boxA antiterminator sequence of the ribosomal RNA (rrn) operons. This is Transcription antitermination protein NusB from Nitratidesulfovibrio vulgaris (strain ATCC 29579 / DSM 644 / CCUG 34227 / NCIMB 8303 / VKM B-1760 / Hildenborough) (Desulfovibrio vulgaris).